Reading from the N-terminus, the 196-residue chain is Imidazoleglycerol-phosphate dehydratase (196 aa).

The protein belongs to the imidazoleglycerol-phosphate dehydratase family.

The protein resides in the cytoplasm. It catalyses the reaction D-erythro-1-(imidazol-4-yl)glycerol 3-phosphate = 3-(imidazol-4-yl)-2-oxopropyl phosphate + H2O. It functions in the pathway amino-acid biosynthesis; L-histidine biosynthesis; L-histidine from 5-phospho-alpha-D-ribose 1-diphosphate: step 6/9. The protein is Imidazoleglycerol-phosphate dehydratase of Granulibacter bethesdensis (strain ATCC BAA-1260 / CGDNIH1).